Here is a 654-residue protein sequence, read N- to C-terminus: Fimbrin-2 (654 aa).

4 consecutive Calponin-homology (CH) domains span residues 124–241, 269–372, 394–500, and 515–623; these read DSEK…KIQL, LPPE…QHRN, SREE…RYNI, and EITD…YWTL. 2 actin-binding regions span residues 124 to 372 and 394 to 623; these read DSEK…QHRN and SREE…YWTL.

In terms of assembly, interacts with F-actin.

It localises to the cytoplasm. The protein resides in the cytoskeleton. Cross-links actin filaments (F-actin). Stabilizes and prevents F-actin depolymerization mediated by profilin. May regulate actin cytoarchitecture, cell cycle, cell division, cell elongation and cytoplasmic tractus. The protein is Fimbrin-2 of Arabidopsis thaliana (Mouse-ear cress).